The following is a 352-amino-acid chain: 4-hydroxy-2-oxovalerate aldolase (352 aa).

Positions 13 to 265 (VRLTDTSLRD…KTGIDFFDIA (253 aa)) constitute a Pyruvate carboxyltransferase domain. A substrate-binding site is contributed by 21 to 22 (RD). D22 is a binding site for Mn(2+). Residue H25 is the Proton acceptor of the active site. Positions 175 and 204 each coordinate substrate. The Mn(2+) site is built by H204 and H206. Y295 provides a ligand contact to substrate.

Belongs to the 4-hydroxy-2-oxovalerate aldolase family.

It catalyses the reaction (S)-4-hydroxy-2-oxopentanoate = acetaldehyde + pyruvate. This chain is 4-hydroxy-2-oxovalerate aldolase, found in Mycobacterium avium (strain 104).